The primary structure comprises 313 residues: Acetyl-coenzyme A carboxylase carboxyl transferase subunit alpha (313 aa).

In terms of domain architecture, CoA carboxyltransferase C-terminal spans 34-288; that stretch reads KLKDQRDIAL…KNVVLEAVNE (255 aa).

The protein belongs to the AccA family. As to quaternary structure, acetyl-CoA carboxylase is a heterohexamer composed of biotin carboxyl carrier protein (AccB), biotin carboxylase (AccC) and two subunits each of ACCase subunit alpha (AccA) and ACCase subunit beta (AccD).

The protein resides in the cytoplasm. The enzyme catalyses N(6)-carboxybiotinyl-L-lysyl-[protein] + acetyl-CoA = N(6)-biotinyl-L-lysyl-[protein] + malonyl-CoA. The protein operates within lipid metabolism; malonyl-CoA biosynthesis; malonyl-CoA from acetyl-CoA: step 1/1. Its function is as follows. Component of the acetyl coenzyme A carboxylase (ACC) complex. First, biotin carboxylase catalyzes the carboxylation of biotin on its carrier protein (BCCP) and then the CO(2) group is transferred by the carboxyltransferase to acetyl-CoA to form malonyl-CoA. The sequence is that of Acetyl-coenzyme A carboxylase carboxyl transferase subunit alpha from Fusobacterium nucleatum subsp. nucleatum (strain ATCC 25586 / DSM 15643 / BCRC 10681 / CIP 101130 / JCM 8532 / KCTC 2640 / LMG 13131 / VPI 4355).